We begin with the raw amino-acid sequence, 445 residues long: 3-phosphoshikimate 1-carboxyvinyltransferase (445 aa).

3-phosphoshikimate contacts are provided by Lys-28, Ser-29, and Arg-33. Residue Lys-28 coordinates phosphoenolpyruvate. Positions 101 and 129 each coordinate phosphoenolpyruvate. 3-phosphoshikimate-binding residues include Ser-175, Gln-177, Asp-328, and Lys-355. Gln-177 is a binding site for phosphoenolpyruvate. Catalysis depends on Asp-328, which acts as the Proton acceptor. 2 residues coordinate phosphoenolpyruvate: Arg-359 and Arg-402.

The protein belongs to the EPSP synthase family. Monomer.

It is found in the cytoplasm. The catalysed reaction is 3-phosphoshikimate + phosphoenolpyruvate = 5-O-(1-carboxyvinyl)-3-phosphoshikimate + phosphate. It functions in the pathway metabolic intermediate biosynthesis; chorismate biosynthesis; chorismate from D-erythrose 4-phosphate and phosphoenolpyruvate: step 6/7. Functionally, catalyzes the transfer of the enolpyruvyl moiety of phosphoenolpyruvate (PEP) to the 5-hydroxyl of shikimate-3-phosphate (S3P) to produce enolpyruvyl shikimate-3-phosphate and inorganic phosphate. The chain is 3-phosphoshikimate 1-carboxyvinyltransferase from Rhodopseudomonas palustris (strain HaA2).